The sequence spans 1336 residues: Lysine-specific demethylase 2B (1336 aa).

A disordered region spans residues 1-25 (MAGPQMGGSAEDHPPRKRHAAEKQK). The segment covering 15-25 (PRKRHAAEKQK) has biased composition (basic residues). At Ser57 the chain carries Phosphoserine. The JmjC domain occupies 178–346 (FSHTKLEHLV…MQLRIYEIED (169 aa)). Thr239 is a binding site for substrate. Fe cation-binding residues include His242 and Asp244. Lys259 serves as a coordination point for substrate. His314 contacts Fe cation. A compositionally biased stretch (acidic residues) spans 410 to 430 (MEEEACDQQPQEEEEKDEEGE). Residues 410 to 465 (MEEEACDQQPQEEEEKDEEGEGRDRAPKPPTDGSTSPTSTPSEDQEALGKKPKAPA) form a disordered region. The span at 440–451 (TDGSTSPTSTPS) shows a compositional bias: low complexity. Phosphoserine occurs at positions 474 and 477. At Thr493 the chain carries Phosphothreonine. Phosphoserine is present on Ser497. The segment at 606–652 (ARRRRTRCRKCEACLRTECGECHFCKDMKKFGGPGRMKQSCIMRQCI) adopts a CXXC-type zinc-finger fold. Cys613, Cys616, Cys619, Cys624, Cys627, Cys630, Cys646, Cys651, Cys662, Cys665, Cys688, Cys691, His696, Cys699, Cys719, and Cys722 together coordinate Zn(2+). Residues 659–725 (TAVCLVCGEA…CWECPKCNHA (67 aa)) form a PHD-type zinc finger. Disordered regions lie at residues 727 to 843 (KTGK…SLSP) and 855 to 1034 (QLKP…SPPK). Positions 749-799 (KEQKMNRDNKEGQEPAKRRSECEEAPRRRSDEHSKKVPPDGLLRRKSDDVH) are enriched in basic and acidic residues. The segment covering 819–843 (SSLQTSPGSSSHLSPRPPLGSSLSP) has biased composition (low complexity). Glycyl lysine isopeptide (Lys-Gly) (interchain with G-Cter in SUMO2) cross-links involve residues Lys857 and Lys890. Residues 902–911 (PKTRESDHSR) show a composition bias toward basic and acidic residues. Positions 932-941 (KVKMRRKRRL) are enriched in basic residues. Residues 942–960 (PNKELSRELSKELNHEIQR) show a composition bias toward basic and acidic residues. Positions 943-971 (NKELSRELSKELNHEIQRTENSLANENQQ) form a coiled coil. Ser951 is modified (phosphoserine). The span at 961-971 (TENSLANENQQ) shows a compositional bias: polar residues. Ser975, Ser979, Ser1018, and Ser1031 each carry phosphoserine. A compositionally biased stretch (low complexity) spans 1014-1024 (PSLRSPPRVIS). Residues 1059-1105 (DGAAHVMHREVWMAVFSYLSHQDLCVCMRVCRTWNRWCCDKRLWTRI) enclose the F-box domain. 7 LRR repeats span residues 1093–1120 (NRWC…MLSG), 1133–1154 (WTNI…LRDL), 1156–1182 (LSGC…DVQW), 1222–1247 (GLDI…HLSY), 1248–1277 (CNHV…NLSD), 1278–1302 (CNKV…DLRY), and 1303–1336 (CKQV…QKLS).

This sequence belongs to the JHDM1 histone demethylase family. In terms of assembly, interacts with SKP1, forming heterodimers. The heterodimeric KDM2B-SKP1 complex interacts with the PCGF1-BCORL1 heterodimeric complex to form a homotetrameric polycomb repression complex 1 (PRC1.1). Directly interacts with CUL1. The SKP1-KDM2B complex interacts with UBB. Requires Fe(2+) as cofactor.

The protein resides in the nucleus. Its subcellular location is the nucleolus. The protein localises to the chromosome. It catalyses the reaction N(6),N(6)-dimethyl-L-lysyl(36)-[histone H3] + 2 2-oxoglutarate + 2 O2 = L-lysyl(36)-[histone H3] + 2 formaldehyde + 2 succinate + 2 CO2. Its activity is regulated as follows. Histone demethylase activity is inhibited by fumarate. Histone demethylase that demethylates 'Lys-4' and 'Lys-36' of histone H3, thereby playing a central role in histone code. Preferentially demethylates trimethylated H3 'Lys-4' and dimethylated H3 'Lys-36' residue while it has weak or no activity for mono- and tri-methylated H3 'Lys-36'. Preferentially binds the transcribed region of ribosomal RNA and represses the transcription of ribosomal RNA genes which inhibits cell growth and proliferation. May also serve as a substrate-recognition component of the SCF (SKP1-CUL1-F-box protein)-type E3 ubiquitin ligase complex. The sequence is that of Lysine-specific demethylase 2B (KDM2B) from Homo sapiens (Human).